Reading from the N-terminus, the 172-residue chain is 3-hydroxydecanoyl-[acyl-carrier-protein] dehydratase (172 aa).

The active site involves histidine 71.

This sequence belongs to the thioester dehydratase family. FabA subfamily. As to quaternary structure, homodimer.

The protein resides in the cytoplasm. The catalysed reaction is a (3R)-hydroxyacyl-[ACP] = a (2E)-enoyl-[ACP] + H2O. It catalyses the reaction (3R)-hydroxydecanoyl-[ACP] = (2E)-decenoyl-[ACP] + H2O. It carries out the reaction (2E)-decenoyl-[ACP] = (3Z)-decenoyl-[ACP]. The protein operates within lipid metabolism; fatty acid biosynthesis. Functionally, necessary for the introduction of cis unsaturation into fatty acids. Catalyzes the dehydration of (3R)-3-hydroxydecanoyl-ACP to E-(2)-decenoyl-ACP and then its isomerization to Z-(3)-decenoyl-ACP. Can catalyze the dehydratase reaction for beta-hydroxyacyl-ACPs with saturated chain lengths up to 16:0, being most active on intermediate chain length. This Brucella abortus (strain S19) protein is 3-hydroxydecanoyl-[acyl-carrier-protein] dehydratase.